The following is a 707-amino-acid chain: Lipase maturation factor 2 (707 aa).

9 helical membrane-spanning segments follow: residues 11–31 (FLWG…AQIP), 78–98 (MEMI…FSFL), 102–122 (LVFL…QVFL), 126–146 (WDSL…VHAL), 220–240 (FSVV…FLPF), 256–276 (ILII…VLCC), 306–326 (LYSL…FWTV), 358–378 (ITFP…LKGM), and 398–418 (VIFS…YTYI). N-linked (GlcNAc...) asparagine glycosylation is present at Asn-483. Residues 634–654 (LLLHSFIFGIFTIYFLQAMFG) form a helical membrane-spanning segment. The tract at residues 659-707 (PGVAKQRHSKPPNEKKKQKSNSGQGESAAAKSSGHGADTVRRNKKNEKS) is disordered. Basic and acidic residues predominate over residues 696–707 (DTVRRNKKNEKS).

The protein belongs to the lipase maturation factor family.

The protein localises to the endoplasmic reticulum membrane. Involved in the maturation of specific proteins in the endoplasmic reticulum. The protein is Lipase maturation factor 2 (lmf2) of Xenopus tropicalis (Western clawed frog).